A 300-amino-acid polypeptide reads, in one-letter code: tRNA dimethylallyltransferase (300 aa).

Gly8 to Ser15 provides a ligand contact to ATP. Ser10–Ser15 contributes to the substrate binding site. The tract at residues Asp33–Ser36 is interaction with substrate tRNA.

It belongs to the IPP transferase family. In terms of assembly, monomer. Mg(2+) serves as cofactor.

The catalysed reaction is adenosine(37) in tRNA + dimethylallyl diphosphate = N(6)-dimethylallyladenosine(37) in tRNA + diphosphate. In terms of biological role, catalyzes the transfer of a dimethylallyl group onto the adenine at position 37 in tRNAs that read codons beginning with uridine, leading to the formation of N6-(dimethylallyl)adenosine (i(6)A). The polypeptide is tRNA dimethylallyltransferase (Wolinella succinogenes (strain ATCC 29543 / DSM 1740 / CCUG 13145 / JCM 31913 / LMG 7466 / NCTC 11488 / FDC 602W) (Vibrio succinogenes)).